Here is a 465-residue protein sequence, read N- to C-terminus: Cerebellar degeneration-related protein 2-like (465 aa).

3 coiled-coil regions span residues 31–64, 91–142, and 188–266; these read AAELGKTLLERNKELEESLQQMYSTNEEQVHEIE, ARDL…LEQL, and LEQE…YLLA. Residues 282-315 are disordered; sequence APEADDPQPGSGDDSNAQDGVSSPAASPSHAVRK. Residues Ser308, Ser318, and Ser344 each carry the phosphoserine modification. A coiled-coil region spans residues 350-377; the sequence is MSILREVDEQYHALLEKYEELLSKCRQH. The tract at residues 382-421 is disordered; that stretch reads RHAGVQTSRPISRDSSWRDLLGGEESPGEGKAGEKSLSQH. Ser407 bears the Phosphoserine mark.

Belongs to the CDR2 family.

In Mus musculus (Mouse), this protein is Cerebellar degeneration-related protein 2-like (Cdr2l).